Here is a 774-residue protein sequence, read N- to C-terminus: Lon protease 2 (774 aa).

A Lon N-terminal domain is found at 5–198 (YPLMPLRDIV…LLLEILFREL (194 aa)). 350 to 357 (GPPGVGKT) provides a ligand contact to ATP. In terms of domain architecture, Lon proteolytic spans 588–769 (RDEVGLATGL…DQVLEQALLS (182 aa)). Catalysis depends on residues Ser675 and Lys718.

It belongs to the peptidase S16 family. Homohexamer. Organized in a ring with a central cavity.

The protein resides in the cytoplasm. It catalyses the reaction Hydrolysis of proteins in presence of ATP.. In terms of biological role, ATP-dependent serine protease that mediates the selective degradation of mutant and abnormal proteins as well as certain short-lived regulatory proteins. Required for cellular homeostasis and for survival from DNA damage and developmental changes induced by stress. Degrades polypeptides processively to yield small peptide fragments that are 5 to 10 amino acids long. Binds to DNA in a double-stranded, site-specific manner. This Desulfotalea psychrophila (strain LSv54 / DSM 12343) protein is Lon protease 2.